A 261-amino-acid polypeptide reads, in one-letter code: MQTTPGKRQRRQRGSINPEDIISGAFELAQQVSIDNLSMPLLGKHLGVGVTSIYWYFRKKDDLLNAMTDRALSKYVFATPYIEAGDWRETLRNHARSMRKTFADNPVLCDLILIRAALSPKTARLGAQEMEKAIANLVTAGLSLEDAFDIYSAVSVHVRGSVVLDRLSRKSQSAGSGPSAIEHPVAIDPATTPLLAHATGRGHRIGAPDETNFEYGLECILDHAGRLIEQSSKAAGEVAVRRPTATADAPTPGARAKAVAR.

An HTH tetR-type domain is found at 15-75 (SINPEDIISG…AMTDRALSKY (61 aa)). A DNA-binding region (H-T-H motif) is located at residues 38–57 (SMPLLGKHLGVGVTSIYWYF). Positions 234 to 261 (AAGEVAVRRPTATADAPTPGARAKAVAR) are disordered. The segment covering 241 to 261 (RRPTATADAPTPGARAKAVAR) has biased composition (low complexity).

This is an uncharacterized protein from Mycobacterium bovis (strain ATCC BAA-935 / AF2122/97).